A 1088-amino-acid polypeptide reads, in one-letter code: RNA-directed RNA polymerase (1088 aa).

Residues 501–687 (LSYGDVTRFL…AKRYIAGGKI (187 aa)) form the RdRp catalytic domain.

The protein belongs to the reoviridae RNA-directed RNA polymerase family. In terms of assembly, interacts with VP3 (Potential). Interacts with VP2; this interaction activates VP1. Interacts with NSP5; this interaction is probably necessary for the formation of functional virus factories. Interacts with NSP2; this interaction is weak. Requires Mg(2+) as cofactor.

It localises to the virion. It catalyses the reaction RNA(n) + a ribonucleoside 5'-triphosphate = RNA(n+1) + diphosphate. In terms of biological role, RNA-directed RNA polymerase that is involved in both transcription and genome replication. Together with VP3 capping enzyme, forms an enzyme complex positioned near the channels situated at each of the five-fold vertices of the core. Following infection, the outermost layer of the virus is lost, leaving a double-layered particle (DLP) made up of the core and VP6 shell. VP1 then catalyzes the transcription of fully conservative plus-strand genomic RNAs that are extruded through the DLP's channels into the cytoplasm where they function as mRNAs for translation of viral proteins. One copy of each of the viral (+)RNAs is also recruited during core assembly, together with newly synthesized polymerase complexes and VP2. The polymerase of these novo-formed particles catalyzes the synthesis of complementary minus-strands leading to dsRNA formation. To do so, the polymerase specifically recognizes and binds 4 bases 5'-UGUG-3' in the conserved 3'-sequence of plus-strand RNA templates. VP2 presumably activates the autoinhibited VP1-RNA complex to coordinate packaging and genome replication. Once dsRNA synthesis is complete, the polymerase switches to the transcriptional mode, thus providing secondary transcription. The protein is RNA-directed RNA polymerase of Rotavirus A (strain RVA/Pig/United States/Gottfried/1983/G4P2B[6]) (RV-A).